Consider the following 339-residue polypeptide: Endo-beta-N-acetylglucosaminidase F1 (339 aa).

Positions 1–50 (MKKFINQFSASLKNNILVFLAFPFVWTSCARDNPLSSENSNISPNAAARA) form a signal peptide, or 51, or 52. One can recognise a GH18 domain in the interval 60 to 326 (IKLFSFTEVN…KLIAKELYGD (267 aa)). The active-site Proton donor is the glutamate 182. A propeptide (removed in mature form) is located at residue tryptophan 339.

This sequence belongs to the glycosyl hydrolase 18 family. As to quaternary structure, monomer.

It is found in the secreted. It catalyses the reaction an N(4)-(oligosaccharide-(1-&gt;3)-[oligosaccharide-(1-&gt;6)]-beta-D-Man-(1-&gt;4)-beta-D-GlcNAc-(1-&gt;4)-alpha-D-GlcNAc)-L-asparaginyl-[protein] + H2O = an oligosaccharide-(1-&gt;3)-[oligosaccharide-(1-&gt;6)]-beta-D-Man-(1-&gt;4)-D-GlcNAc + N(4)-(N-acetyl-beta-D-glucosaminyl)-L-asparaginyl-[protein]. In terms of biological role, endohydrolysis of the di-N-acetylchitobiosyl unit in high-mannose glycopeptides and glycoproteins. Does not hydrolyze complex bi- or triantennary glycans. The presence of a core-bound fucose impedes endo F1 hydrolysis. This is Endo-beta-N-acetylglucosaminidase F1 (endOF1) from Elizabethkingia meningoseptica (Chryseobacterium meningosepticum).